A 280-amino-acid chain; its full sequence is Band 7 protein AGAP004871 (280 aa).

Residues Ile23–Cys43 form a helical membrane-spanning segment.

This sequence belongs to the band 7/mec-2 family.

Its subcellular location is the membrane. The chain is Band 7 protein AGAP004871 from Anopheles gambiae (African malaria mosquito).